Reading from the N-terminus, the 237-residue chain is Homeobox protein Nkx-3.1 (237 aa).

The segment covering 1–14 (MLRVAEPREPRVEA) has biased composition (basic and acidic residues). Disordered stretches follow at residues 1-96 (MLRV…EPES) and 108-130 (EHNPGDLASAPQVTKQPQKRSRA). The segment covering 24 to 34 (PTQSKRLTSFL) has biased composition (polar residues). 2 stretches are compositionally biased toward basic and acidic residues: residues 38–47 (ILRDRAERHG) and 57–71 (PDPRRDSAPEPDKAG). Positions 125–184 (QKRSRAAFSHTQVIELERKFSHQKYLSAPERAHLAKNLKLTETQVKIWFQNRRYKTKRKQ) form a DNA-binding region, homeobox.

This sequence belongs to the NK-3 homeobox family. In terms of assembly, interacts with serum response factor (SRF). Interacts with SPDEF. Interacts with WDR77. Interacts with TOPORS which polyubiquitinates NKX3-1 and induces its proteasomal degradation. Interacts with FEM1B. Ubiquitinated by TOPORS; monoubiquitinated at several residues and also polyubiquitinated on single residues. Expressed mostly in the male urogenital tract, with highest expression in the epithelial cells lining the ducts of anterior, dorsolateral and ventral prostate and in the bulbourethral gland, and much lower in the seminal vesicle and the testis. Expression in the prostate increases during sexual maturation and is drastically reduced following castration. Expressed also in brain (hippocampus and external granular layer of the cerebral cortex), kidney (intralobular arteries), thymus and adrenal and salivary glands.

Its subcellular location is the nucleus. Its function is as follows. Transcription factor, which binds preferentially the consensus sequence 5'-TAAGT[AG]-3' and can behave as a transcriptional repressor. Plays an important role in normal prostate development, regulating proliferation of glandular epithelium and in the formation of ducts in prostate. Acts as a tumor suppressor controlling prostate carcinogenesis, as shown by the ability to suppress growth and tumorigenicity of prostate carcinoma cells. Plays a role in the formation of minor salivary glands (particularly palatine and lingual glands). The chain is Homeobox protein Nkx-3.1 from Mus musculus (Mouse).